A 273-amino-acid polypeptide reads, in one-letter code: Histidine racemase (273 aa).

The active-site Proton acceptor is the C72. The active-site Proton donor is the C211.

Belongs to the histidine racemase family. Homodimer.

The protein localises to the cytoplasm. It catalyses the reaction L-histidine = D-histidine. Isomerase that catalyzes the conversion of L-histidine to D-histidine. Functions the biosynthesis of the metallophore staphylopine, which is involved in the acquisition of nickel, cobalt, zinc, copper, and iron, and thus enables bacterial growth inside the host, where metal access is limited. Therefore, this enzyme probably contributes to staphylococcal virulence. The reaction is reversible in vitro, the enzyme can produce D-histidine from the L-stereoisomer and vice versa. Appears to be specific for histidine as it cannot use other amino acids as substrate, including L-alanine and L-methionine. The chain is Histidine racemase from Staphylococcus aureus (strain Mu50 / ATCC 700699).